The following is a 141-amino-acid chain: 3-hydroxyacyl-[acyl-carrier-protein] dehydratase FabZ (141 aa).

H48 is an active-site residue.

Belongs to the thioester dehydratase family. FabZ subfamily.

It is found in the cytoplasm. The enzyme catalyses a (3R)-hydroxyacyl-[ACP] = a (2E)-enoyl-[ACP] + H2O. Its function is as follows. Involved in unsaturated fatty acids biosynthesis. Catalyzes the dehydration of short chain beta-hydroxyacyl-ACPs and long chain saturated and unsaturated beta-hydroxyacyl-ACPs. This chain is 3-hydroxyacyl-[acyl-carrier-protein] dehydratase FabZ, found in Streptococcus thermophilus (strain CNRZ 1066).